The chain runs to 1121 residues: uncharacterized protein (1121 aa).

Residues 179–198 (GPGECQSVHNQSSGSGSNSY) are disordered. N-linked (GlcNAc...) asparagine; by host glycosylation is found at Asn188, Asn325, Asn351, Asn449, Asn561, and Asn615. Disordered stretches follow at residues 649–684 (KRIH…RIHN) and 701–734 (STRQ…TDSD). Residues 701–715 (STRQDASGGSSSGTK) show a composition bias toward polar residues. Asn838, Asn911, Asn914, and Asn980 each carry an N-linked (GlcNAc...) asparagine; by host glycan.

It belongs to the herpesviridae US22 family.

This is an uncharacterized protein from Homo sapiens (Human).